The following is a 93-amino-acid chain: Protein Tat (93 aa).

Residues 1–24 form an interaction with human CREBBP region; sequence MEPVDPELEPWNHPGSQPKTACNN. Residues 1-48 form a transactivation region; it reads MEPVDPELEPWNHPGSQPKTACNNCHCKVCCYHCVYCFTKKGLGISYG. Residues C22, C25, and C27 each contribute to the Zn(2+) site. Residues 22–37 are cysteine-rich; the sequence is CNNCHCKVCCYHCVYC. K28 bears the N6-acetyllysine; by host PCAF mark. 4 residues coordinate Zn(2+): C30, H33, C34, and C37. Positions 38 to 48 are core; the sequence is FTKKGLGISYG. Positions 48 to 58 are enriched in basic residues; sequence GRKKRSQRRRT. The segment at 48 to 93 is disordered; the sequence is GRKKRSQRRRTPQSNKSHQDPLPKQPLSQRLGDQTGQKEQKKTLES. Positions 49-57 match the Nuclear localization signal, RNA-binding (TAR), and protein transduction motif; the sequence is RKKRSQRRR. The interaction with the host capping enzyme RNGTT stretch occupies residues 49 to 86; sequence RKKRSQRRRTPQSNKSHQDPLPKQPLSQRLGDQTGQKE. N6-acetyllysine; by host EP300 and GCN5L2 is present on residues K50 and K51. An Asymmetric dimethylarginine; by host PRMT6 modification is found at R52. Residue K71 forms a Glycyl lysine isopeptide (Lys-Gly) (interchain with G-Cter in ubiquitin) linkage. Residues 73–82 are compositionally biased toward polar residues; that stretch reads PLSQRLGDQT. The segment covering 83-93 has biased composition (basic and acidic residues); sequence GQKEQKKTLES.

This sequence belongs to the lentiviruses Tat family. In terms of assembly, interacts with host CCNT1. Associates with the P-TEFb complex composed at least of Tat, P-TEFb (CDK9 and CCNT1), TAR RNA, RNA Pol II. Recruits the HATs CREBBP, TAF1/TFIID, EP300, PCAF and GCN5L2. Interacts with host KAT5/Tip60; this interaction targets the latter to degradation. Interacts with the host deacetylase SIRT1. Interacts with host capping enzyme RNGTT; this interaction stimulates RNGTT. Binds to host KDR, and to the host integrins ITGAV/ITGB3 and ITGA5/ITGB1. Interacts with host KPNB1/importin beta-1 without previous binding to KPNA1/importin alpha-1. Interacts with EIF2AK2. Interacts with host nucleosome assembly protein NAP1L1; this interaction may be required for the transport of Tat within the nucleus, since the two proteins interact at the nuclear rim. Interacts with host C1QBP/SF2P32; this interaction involves lysine-acetylated Tat. Interacts with the host chemokine receptors CCR2, CCR3 and CXCR4. Interacts with host DPP4/CD26; this interaction may trigger an anti-proliferative effect. Interacts with host LDLR. Interacts with the host extracellular matrix metalloproteinase MMP1. Interacts with host PRMT6; this interaction mediates Tat's methylation. Interacts with, and is ubiquitinated by MDM2/Hdm2. Interacts with host PSMC3 and HTATIP2. Interacts with STAB1; this interaction may overcome SATB1-mediated repression of IL2 and IL2RA (interleukin) in T cells by binding to the same domain than HDAC1. Interacts (when acetylated) with human CDK13, thereby increasing HIV-1 mRNA splicing and promoting the production of the doubly spliced HIV-1 protein Nef. Interacts with host TBP; this interaction modulates the activity of transcriptional pre-initiation complex. Interacts with host RELA. Asymmetrical arginine methylation by host PRMT6 seems to diminish the transactivation capacity of Tat and affects the interaction with host CCNT1. Post-translationally, acetylation by EP300, CREBBP, GCN5L2/GCN5 and PCAF regulates the transactivation activity of Tat. EP300-mediated acetylation of Lys-50 promotes dissociation of Tat from the TAR RNA through the competitive binding to PCAF's bromodomain. In addition, the non-acetylated Tat's N-terminus can also interact with PCAF. PCAF-mediated acetylation of Lys-28 enhances Tat's binding to CCNT1. Lys-50 is deacetylated by SIRT1. In terms of processing, polyubiquitination by host MDM2 does not target Tat to degradation, but activates its transactivation function and fosters interaction with CCNT1 and TAR RNA. Phosphorylated by EIF2AK2 on serine and threonine residues adjacent to the basic region important for TAR RNA binding and function. Phosphorylation of Tat by EIF2AK2 is dependent on the prior activation of EIF2AK2 by dsRNA.

The protein resides in the host nucleus. The protein localises to the host nucleolus. Its subcellular location is the host cytoplasm. It localises to the secreted. In terms of biological role, transcriptional activator that increases RNA Pol II processivity, thereby increasing the level of full-length viral transcripts. Recognizes a hairpin structure at the 5'-LTR of the nascent viral mRNAs referred to as the transactivation responsive RNA element (TAR) and recruits the cyclin T1-CDK9 complex (P-TEFb complex) that will in turn hyperphosphorylate the RNA polymerase II to allow efficient elongation. The CDK9 component of P-TEFb and other Tat-activated kinases hyperphosphorylate the C-terminus of RNA Pol II that becomes stabilized and much more processive. Other factors such as HTATSF1/Tat-SF1, SUPT5H/SPT5, and HTATIP2 are also important for Tat's function. Besides its effect on RNA Pol II processivity, Tat induces chromatin remodeling of proviral genes by recruiting the histone acetyltransferases (HATs) CREBBP, EP300 and PCAF to the chromatin. This also contributes to the increase in proviral transcription rate, especially when the provirus integrates in transcriptionally silent region of the host genome. To ensure maximal activation of the LTR, Tat mediates nuclear translocation of NF-kappa-B by interacting with host RELA. Through its interaction with host TBP, Tat may also modulate transcription initiation. Tat can reactivate a latently infected cell by penetrating in it and transactivating its LTR promoter. In the cytoplasm, Tat is thought to act as a translational activator of HIV-1 mRNAs. Its function is as follows. Extracellular circulating Tat can be endocytosed by surrounding uninfected cells via the binding to several surface receptors such as CD26, CXCR4, heparan sulfate proteoglycans (HSPG) or LDLR. Neurons are rarely infected, but they internalize Tat via their LDLR. Through its interaction with nuclear HATs, Tat is potentially able to control the acetylation-dependent cellular gene expression. Modulates the expression of many cellular genes involved in cell survival, proliferation or in coding for cytokines or cytokine receptors. Tat plays a role in T-cell and neurons apoptosis. Tat induced neurotoxicity and apoptosis probably contribute to neuroAIDS. Circulating Tat also acts as a chemokine-like and/or growth factor-like molecule that binds to specific receptors on the surface of the cells, affecting many cellular pathways. In the vascular system, Tat binds to ITGAV/ITGB3 and ITGA5/ITGB1 integrins dimers at the surface of endothelial cells and competes with bFGF for heparin-binding sites, leading to an excess of soluble bFGF. In Pan troglodytes (Chimpanzee), this protein is Protein Tat.